The following is a 249-amino-acid chain: DNA polymerase sliding clamp 1 (249 aa).

This sequence belongs to the PCNA family. As to quaternary structure, homotrimer. The subunits circularize to form a toroid; DNA passes through its center. Replication factor C (RFC) is required to load the toroid on the DNA.

Its function is as follows. Sliding clamp subunit that acts as a moving platform for DNA processing. Responsible for tethering the catalytic subunit of DNA polymerase and other proteins to DNA during high-speed replication. The sequence is that of DNA polymerase sliding clamp 1 from Pyrobaculum aerophilum (strain ATCC 51768 / DSM 7523 / JCM 9630 / CIP 104966 / NBRC 100827 / IM2).